Here is a 545-residue protein sequence, read N- to C-terminus: CTP synthase (545 aa).

Residues 1 to 266 are amidoligase domain; the sequence is MTTNYIFVTG…DDYICKRFSL (266 aa). Serine 14 contributes to the CTP binding site. Serine 14 provides a ligand contact to UTP. ATP-binding positions include 15–20 and aspartate 72; that span reads SLGKGI. Mg(2+) contacts are provided by aspartate 72 and glutamate 140. CTP-binding positions include 147 to 149, 187 to 192, and lysine 223; these read DIE and KTKPTQ. UTP contacts are provided by residues 187 to 192 and lysine 223; that span reads KTKPTQ. 239 to 241 is a binding site for ATP; it reads KDV. Residues 291–542 form the Glutamine amidotransferase type-1 domain; the sequence is TIGMIGKYVE…VKAAGDYQKR (252 aa). Glycine 352 contributes to the L-glutamine binding site. The active-site Nucleophile; for glutamine hydrolysis is cysteine 379. Residues 380 to 383, glutamate 403, and arginine 470 contribute to the L-glutamine site; that span reads LGMQ. Residues histidine 515 and glutamate 517 contribute to the active site.

Belongs to the CTP synthase family. Homotetramer.

The enzyme catalyses UTP + L-glutamine + ATP + H2O = CTP + L-glutamate + ADP + phosphate + 2 H(+). It carries out the reaction L-glutamine + H2O = L-glutamate + NH4(+). It catalyses the reaction UTP + NH4(+) + ATP = CTP + ADP + phosphate + 2 H(+). It participates in pyrimidine metabolism; CTP biosynthesis via de novo pathway; CTP from UDP: step 2/2. Its activity is regulated as follows. Allosterically activated by GTP, when glutamine is the substrate; GTP has no effect on the reaction when ammonia is the substrate. The allosteric effector GTP functions by stabilizing the protein conformation that binds the tetrahedral intermediate(s) formed during glutamine hydrolysis. Inhibited by the product CTP, via allosteric rather than competitive inhibition. Functionally, catalyzes the ATP-dependent amination of UTP to CTP with either L-glutamine or ammonia as the source of nitrogen. Regulates intracellular CTP levels through interactions with the four ribonucleotide triphosphates. This chain is CTP synthase, found in Yersinia pseudotuberculosis serotype O:1b (strain IP 31758).